The primary structure comprises 440 residues: Light-independent protochlorophyllide reductase subunit N (440 aa).

The segment at 1–24 (MTCRPALSDSHPPEPGTPSSPSFG) is disordered. The [4Fe-4S] cluster site is built by cysteine 42, cysteine 67, and cysteine 128.

The protein belongs to the BchN/ChlN family. As to quaternary structure, protochlorophyllide reductase is composed of three subunits; BchL, BchN and BchB. Forms a heterotetramer of two BchB and two BchN subunits. Requires [4Fe-4S] cluster as cofactor.

The catalysed reaction is chlorophyllide a + oxidized 2[4Fe-4S]-[ferredoxin] + 2 ADP + 2 phosphate = protochlorophyllide a + reduced 2[4Fe-4S]-[ferredoxin] + 2 ATP + 2 H2O. It participates in porphyrin-containing compound metabolism; bacteriochlorophyll biosynthesis (light-independent). Functionally, component of the dark-operative protochlorophyllide reductase (DPOR) that uses Mg-ATP and reduced ferredoxin to reduce ring D of protochlorophyllide (Pchlide) to form chlorophyllide a (Chlide). This reaction is light-independent. The NB-protein (BchN-BchB) is the catalytic component of the complex. This is Light-independent protochlorophyllide reductase subunit N from Rhodospirillum rubrum (strain ATCC 11170 / ATH 1.1.1 / DSM 467 / LMG 4362 / NCIMB 8255 / S1).